The following is a 659-amino-acid chain: Cysteine-rich receptor-like protein kinase 18 (659 aa).

An N-terminal signal peptide occupies residues 1-27 (MATKSCELVLCFFVFFVISFSAISVSA). Gnk2-homologous domains are found at residues 28–131 (QTCD…NRPF) and 137–250 (MDPL…VYPF). Over 28-287 (QTCDNTTGTF…KNDSRISGGK (260 aa)) the chain is Extracellular. 9 N-linked (GlcNAc...) asparagine glycosylation sites follow: asparagine 32, asparagine 57, asparagine 152, asparagine 162, asparagine 179, asparagine 180, asparagine 197, asparagine 275, and asparagine 279. A helical membrane pass occupies residues 288 to 308 (IAAIVVVTVVTIILVVLGFVI). Over 309 to 659 (SNRRKQKQEM…EATITDVNPR (351 aa)) the chain is Cytoplasmic. The Protein kinase domain occupies 339-611 (FSERNKLGKG…PTMSTIHQML (273 aa)). ATP-binding positions include 345–353 (LGKGGFGEV) and lysine 367. Phosphotyrosine is present on tyrosine 412. Aspartate 464 functions as the Proton acceptor in the catalytic mechanism. A Phosphoserine modification is found at serine 468. Threonine 504 carries the phosphothreonine modification. Tyrosine 512 is modified (phosphotyrosine).

It belongs to the protein kinase superfamily. Ser/Thr protein kinase family. CRK subfamily.

Its subcellular location is the membrane. The catalysed reaction is L-seryl-[protein] + ATP = O-phospho-L-seryl-[protein] + ADP + H(+). It carries out the reaction L-threonyl-[protein] + ATP = O-phospho-L-threonyl-[protein] + ADP + H(+). The sequence is that of Cysteine-rich receptor-like protein kinase 18 (CRK18) from Arabidopsis thaliana (Mouse-ear cress).